A 462-amino-acid polypeptide reads, in one-letter code: Lysophospholipid acyltransferase 1 (462 aa).

Transmembrane regions (helical) follow at residues 9–29 (SIGVSVAVLRFLLCFVATIPV), 52–72 (FLSYLSFGFSSNLHFLVPMTI), 84–104 (CGIITFFLGFAYLIGCHVFYM), 158–178 (SLIEYFGYCLCCGSHFAGPVY), 211–231 (AILQAAICMALYLYLVPQYPL), 263–283 (YFIWSISEASIIISGLGFSGW), 353–373 (AVWHGLYPGYMMFFVQSALMI), 396–416 (IMVFINFLYTVLVLNYSAVGF), and 431–451 (VYYIGTIIPVGLILLSYVVPA). H356 is a catalytic residue.

The protein belongs to the membrane-bound acyltransferase family. As to expression, expressed in roots, rosette leaves, petals, stigma, chalazal endosperm of developing seeds and vascular bundles of siliques.

The protein localises to the endoplasmic reticulum membrane. It carries out the reaction a 1-acyl-sn-glycero-3-phosphocholine + an acyl-CoA = a 1,2-diacyl-sn-glycero-3-phosphocholine + CoA. It catalyses the reaction 1-(9Z-octadecenoyl)-sn-glycero-3-phosphocholine + (9Z)-octadecenoyl-CoA = 1,2-di-(9Z-octadecenoyl)-sn-glycero-3-phosphocholine + CoA. The enzyme catalyses 1-(9Z-octadecenoyl)-sn-glycero-3-phosphocholine + (9Z,12Z)-octadecadienoyl-CoA = 1-(9Z)-octadecenoyl-2-(9Z,12Z)-octadecadienoyl-sn-glycero-3-phosphocholine + CoA. The catalysed reaction is (9Z,12Z,15Z)-octadecatrienoyl-CoA + 1-(9Z-octadecenoyl)-sn-glycero-3-phosphocholine = 1-(9Z-octadecaenoyl)-2-(9Z,12Z,15Z-octadecatrienoyl)-sn-glycero-3-phosphocholine + CoA. It carries out the reaction a 1-acyl-sn-glycero-3-phosphoethanolamine + an acyl-CoA = a 1,2-diacyl-sn-glycero-3-phosphoethanolamine + CoA. It catalyses the reaction a 1-acyl-sn-glycero-3-phospho-L-serine + an acyl-CoA = a 1,2-diacyl-sn-glycero-3-phospho-L-serine + CoA. In terms of biological role, lysophospholipid acyltransferase with broad specificity. Mediates the conversion of lysophosphatidylethanolamine (1-acyl-sn-glycero-3-phosphoethanolamine or LPE) into phosphatidylethanolamine (1,2-diacyl-sn-glycero-3-phosphoethanolamine or PE) (LPEAT activity). Catalyzes the acylation of lysophosphatidylserine (1-acyl-2-hydroxy-sn-glycero-3-phospho-L-serine or LPS) into phosphatidylserine (1,2-diacyl-sn-glycero-3-phospho-L-serine or PS) (LPSAT activity). Can convert lysophosphatidylcholine (1-acyl-sn-glycero-3-phosphocholine or LPC) into phosphatidylcholine (1,2-diacyl-sn-glycero-3-phosphocholine or PC) (LPCAT activity). Exhibits preference for C18-unsaturated acyl-CoA when transferring an acyl group to lysophosphatidylcholine. Can also utilize lysophosphatidylglycerol (LPG) as substrate in vitro. Has neither activity towards lysophosphatidic acid (LPA) nor lysophosphatidylinositol (LPI). Lysophospholipid acyltransferases catalyze the reacylation step of the phospholipid remodeling pathway also known as the Lands cycle. The primary function of the Lands cycle is to provide a route for acyl remodeling to modify fatty acid (FA) composition of phospholipids derived from the Kennedy pathway. Is involved in PC acyl editing and phosphocholine headgroup exchange between PC and diacylglycerols. This processes control the majority of acyl fluxes through PC to provide polyunsaturated fatty acids for triacylglycerols synthesis in seeds. Involved with LPCAT2 in the direct incorporation of newly synthesized fatty acids exported form the chloroplast into PC through acyl editing. The sequence is that of Lysophospholipid acyltransferase 1 from Arabidopsis thaliana (Mouse-ear cress).